We begin with the raw amino-acid sequence, 136 residues long: Small ribosomal subunit protein uS19 (136 aa).

A disordered region spans residues 114–136 (RSRVSHGSAGVGATRSSKFVPLK).

The protein belongs to the universal ribosomal protein uS19 family.

Functionally, protein S19 forms a complex with S13 that binds strongly to the 16S ribosomal RNA. The polypeptide is Small ribosomal subunit protein uS19 (Methanosarcina acetivorans (strain ATCC 35395 / DSM 2834 / JCM 12185 / C2A)).